Here is a 285-residue protein sequence, read N- to C-terminus: 2-dehydro-3-deoxyphosphooctonate aldolase (285 aa).

Belongs to the KdsA family.

Its subcellular location is the cytoplasm. It catalyses the reaction D-arabinose 5-phosphate + phosphoenolpyruvate + H2O = 3-deoxy-alpha-D-manno-2-octulosonate-8-phosphate + phosphate. The protein operates within carbohydrate biosynthesis; 3-deoxy-D-manno-octulosonate biosynthesis; 3-deoxy-D-manno-octulosonate from D-ribulose 5-phosphate: step 2/3. Its pathway is bacterial outer membrane biogenesis; lipopolysaccharide biosynthesis. The chain is 2-dehydro-3-deoxyphosphooctonate aldolase from Bordetella bronchiseptica (strain ATCC BAA-588 / NCTC 13252 / RB50) (Alcaligenes bronchisepticus).